The chain runs to 151 residues: MTKLEQDLVAMLTPAVEMLGFELHGLEFVQAGRHSTLRVYITHEAGISVDNCADASRQISAILDVEDPITNEYDLEVSSPGVDRLLFKQDHYEQAQGEEVQLRTKLPQDGRRNFKGDLIAVTSDMITLSSDGTEHLIMLSNIERANIIAKF.

The protein belongs to the RimP family.

The protein resides in the cytoplasm. Its function is as follows. Required for maturation of 30S ribosomal subunits. This Pseudoalteromonas translucida (strain TAC 125) protein is Ribosome maturation factor RimP.